The sequence spans 389 residues: Phosphatidylglycerol--prolipoprotein diacylglyceryl transferase (389 aa).

4 helical membrane passes run 28-48 (IIVA…LIYF), 58-78 (FFIF…YFLI), 98-118 (LAIQ…FNVF), and 148-168 (ISVF…QAIG). A 1,2-diacyl-sn-glycero-3-phospho-(1'-sn-glycerol) is bound at residue Arg-169. 3 consecutive transmembrane segments (helical) span residues 220-240 (IPLF…IYFV), 281-301 (IVFS…CQTL), and 309-329 (FWTY…TTLF).

It belongs to the Lgt family.

The protein resides in the cell membrane. The catalysed reaction is L-cysteinyl-[prolipoprotein] + a 1,2-diacyl-sn-glycero-3-phospho-(1'-sn-glycerol) = an S-1,2-diacyl-sn-glyceryl-L-cysteinyl-[prolipoprotein] + sn-glycerol 1-phosphate + H(+). The protein operates within protein modification; lipoprotein biosynthesis (diacylglyceryl transfer). Functionally, catalyzes the transfer of the diacylglyceryl group from phosphatidylglycerol to the sulfhydryl group of the N-terminal cysteine of a prolipoprotein, the first step in the formation of mature lipoproteins. This Mycoplasma pneumoniae (strain ATCC 29342 / M129 / Subtype 1) (Mycoplasmoides pneumoniae) protein is Phosphatidylglycerol--prolipoprotein diacylglyceryl transferase.